Consider the following 313-residue polypeptide: Proline iminopeptidase (313 aa).

In terms of domain architecture, AB hydrolase-1 spans 35–298 (KPVVMLHGGP…SPASGHSAFE (264 aa)). Catalysis depends on serine 110, which acts as the Nucleophile. Residue aspartate 266 is part of the active site. Histidine 294 (proton donor) is an active-site residue.

It belongs to the peptidase S33 family. In terms of assembly, homooligomer.

The protein resides in the cytoplasm. The catalysed reaction is Release of N-terminal proline from a peptide.. Functionally, may be involved in proline metabolism and sensitivity to ascamycin. Has ascamycin dealanylating activity. In Xanthomonas citri (Xanthomonas campestris pv. citri), this protein is Proline iminopeptidase (pip).